The chain runs to 270 residues: Putative phosphoenolpyruvate synthase regulatory protein (270 aa).

154-161 contacts ADP; sequence GVSRAGKT.

It belongs to the pyruvate, phosphate/water dikinase regulatory protein family. PSRP subfamily.

It carries out the reaction [pyruvate, water dikinase] + ADP = [pyruvate, water dikinase]-phosphate + AMP + H(+). The enzyme catalyses [pyruvate, water dikinase]-phosphate + phosphate + H(+) = [pyruvate, water dikinase] + diphosphate. Functionally, bifunctional serine/threonine kinase and phosphorylase involved in the regulation of the phosphoenolpyruvate synthase (PEPS) by catalyzing its phosphorylation/dephosphorylation. In Deinococcus geothermalis (strain DSM 11300 / CIP 105573 / AG-3a), this protein is Putative phosphoenolpyruvate synthase regulatory protein.